We begin with the raw amino-acid sequence, 1355 residues long: Probable aldehyde oxidase 2 (1355 aa).

The 88-residue stretch at arginine 9–isoleucine 96 folds into the 2Fe-2S ferredoxin-type domain. 4 residues coordinate [2Fe-2S] cluster: cysteine 48, cysteine 53, cysteine 56, and cysteine 78. The region spanning valine 244–serine 422 is the FAD-binding PCMH-type domain. Residues proline 544–aspartate 577 form a disordered region. Over residues asparagine 548–serine 566 the composition is skewed to polar residues.

Belongs to the xanthine dehydrogenase family. As to quaternary structure, aldehyde oxidases (AO) are homodimers and heterodimers of AO subunits. Requires [2Fe-2S] cluster as cofactor. FAD serves as cofactor. It depends on Mo-molybdopterin as a cofactor.

The catalysed reaction is an aldehyde + O2 + H2O = a carboxylate + H2O2 + H(+). The chain is Probable aldehyde oxidase 2 from Oryza sativa subsp. japonica (Rice).